Consider the following 120-residue polypeptide: NAD(P)H-quinone oxidoreductase subunit 3, chloroplastic (120 aa).

The next 3 helical transmembrane spans lie at 9 to 29, 64 to 84, and 88 to 108; these read IFWA…LISG, MFAL…PWAM, and VLGV…ILGL.

This sequence belongs to the complex I subunit 3 family. As to quaternary structure, NDH is composed of at least 16 different subunits, 5 of which are encoded in the nucleus.

Its subcellular location is the plastid. The protein localises to the chloroplast thylakoid membrane. It catalyses the reaction a plastoquinone + NADH + (n+1) H(+)(in) = a plastoquinol + NAD(+) + n H(+)(out). The catalysed reaction is a plastoquinone + NADPH + (n+1) H(+)(in) = a plastoquinol + NADP(+) + n H(+)(out). Functionally, NDH shuttles electrons from NAD(P)H:plastoquinone, via FMN and iron-sulfur (Fe-S) centers, to quinones in the photosynthetic chain and possibly in a chloroplast respiratory chain. The immediate electron acceptor for the enzyme in this species is believed to be plastoquinone. Couples the redox reaction to proton translocation, and thus conserves the redox energy in a proton gradient. The chain is NAD(P)H-quinone oxidoreductase subunit 3, chloroplastic from Olimarabidopsis pumila (Dwarf rocket).